We begin with the raw amino-acid sequence, 79 residues long: Hematopoietic cell signal transducer (79 aa).

A signal peptide spans 1–18; that stretch reads MVPPGNILFLLLLPVATA. Residues 19–35 lie on the Extracellular side of the membrane; sequence QMTPGSCSGCGPLSLPL. Residues 36–56 traverse the membrane as a helical segment; it reads LAGLVAADAVVSLLIVVVVFV. Residues 57–79 lie on the Cytoplasmic side of the membrane; sequence CARLRSRPTQEDDKIYINMPGRG. Tyr-72 carries the post-translational modification Phosphotyrosine. The interval 72–74 is GRB2 binding site; sequence YIN. Residues 72-75 form a PIK3R1 binding site region; the sequence is YINM.

It belongs to the DAP10 family. As to quaternary structure, homodimer; Disulfide-linked. Heterohexamer composed of four subunits of HCST/DAP10 and two subunits of KLRK1. Interacts (via transmembrane domain) with KLRK1 (via transmembrane domain); the interaction is required for KLRK1 NK cell surface and induces NK cell-mediated cytotoxicity. Interacts with PIK3R1 and GRB2. Interacts with CLEC5A. Forms an CLEC5A/TYROBP/HCST trimolecular complex depending almost solely on TYROBP. Interacts with KLRK1. Interacts with CD300H. Post-translationally, phosphorylated; PIK3R1 and GRB2 associate specifically with tyrosine-phosphorylated HCST. In terms of processing, O-glycosylated.

The protein localises to the membrane. Its function is as follows. Transmembrane adapter protein which associates with KLRK1 to form an activation receptor KLRK1-HCST in lymphoid and myeloid cells; this receptor plays a major role in triggering cytotoxicity against target cells expressing cell surface ligands such as MHC class I chain-related MICA and MICB, and UL16-binding proteins (ULBPs); these ligands are up-regulated by stress conditions and pathological state such as viral infection and tumor transformation. Functions as a docking site for PI3-kinase PIK3R1 and GRB2. Interaction of ULBPs with KLRK1-HCST triggers calcium mobilization and activation of the PIK3R1, MAP2K/ERK, and JAK2/STAT5 signaling pathways. Both PIK3R1 and GRB2 are required for full KLRK1-HCST-mediated activation and ultimate killing of target cells. In NK cells, KLRK1-HCST signaling directly induces cytotoxicity and enhances cytokine production initiated via DAP12/TYROBP-associated receptors. In T-cells, it provides primarily costimulation for TCR-induced signals. KLRK1-HCST receptor plays a role in immune surveillance against tumors and is required for cytolysis of tumors cells; indeed, melanoma cells that do not express KLRK1 ligands escape from immune surveillance mediated by NK cells. The chain is Hematopoietic cell signal transducer (HCST) from Bos taurus (Bovine).